Here is a 711-residue protein sequence, read N- to C-terminus: Progesterone receptor (711 aa).

The modulating, Pro-Rich stretch occupies residues 1-347; it reads MEDKSKQCLQ…YGFDALPRKI (347 aa). NR C4-type zinc fingers lie at residues 348–368 and 384–408; these read CLIC…CGSC and CAGR…LKKC. Positions 348–420 form a DNA-binding region, nuclear receptor; it reads CLICSDEASG…AGMVLGGRKF (73 aa). Positions 457 to 691 constitute an NR LBD domain; it reads QEVQYFPELL…EFPEMMTEVI (235 aa).

The protein belongs to the nuclear hormone receptor family. NR3 subfamily. Expressed in all tissues examined: highly expressed in testis and brain. Also expressed in heart, lung, liver, kidney, stomach and small intestine.

The protein resides in the nucleus. The steroid hormones and their receptors are involved in the regulation of eukaryotic gene expression and affect cellular proliferation and differentiation in target tissues. This Rana dybowskii (Dybovsky's frog) protein is Progesterone receptor (pgr).